Here is a 162-residue protein sequence, read N- to C-terminus: NADH-quinone oxidoreductase subunit I 2 (162 aa).

4Fe-4S ferredoxin-type domains follow at residues 53-83 and 93-122; these read LRRYPNGEERCIACKLCEAVCPALAITIESE and TRYDIDLTKCIFCGFCEESCPVDSIVETRI. Residues cysteine 63, cysteine 66, cysteine 69, cysteine 73, cysteine 102, cysteine 105, cysteine 108, and cysteine 112 each coordinate [4Fe-4S] cluster.

Belongs to the complex I 23 kDa subunit family. NDH-1 is composed of 14 different subunits. Subunits NuoA, H, J, K, L, M, N constitute the membrane sector of the complex. Requires [4Fe-4S] cluster as cofactor.

Its subcellular location is the cell inner membrane. The enzyme catalyses a quinone + NADH + 5 H(+)(in) = a quinol + NAD(+) + 4 H(+)(out). NDH-1 shuttles electrons from NADH, via FMN and iron-sulfur (Fe-S) centers, to quinones in the respiratory chain. The immediate electron acceptor for the enzyme in this species is believed to be ubiquinone. Couples the redox reaction to proton translocation (for every two electrons transferred, four hydrogen ions are translocated across the cytoplasmic membrane), and thus conserves the redox energy in a proton gradient. This chain is NADH-quinone oxidoreductase subunit I 2, found in Nitrosospira multiformis (strain ATCC 25196 / NCIMB 11849 / C 71).